A 241-amino-acid polypeptide reads, in one-letter code: 1-(5-phosphoribosyl)-5-[(5-phosphoribosylamino)methylideneamino] imidazole-4-carboxamide isomerase (241 aa).

Asp8 functions as the Proton acceptor in the catalytic mechanism. Asp129 functions as the Proton donor in the catalytic mechanism.

The protein belongs to the HisA/HisF family.

It localises to the cytoplasm. The enzyme catalyses 1-(5-phospho-beta-D-ribosyl)-5-[(5-phospho-beta-D-ribosylamino)methylideneamino]imidazole-4-carboxamide = 5-[(5-phospho-1-deoxy-D-ribulos-1-ylimino)methylamino]-1-(5-phospho-beta-D-ribosyl)imidazole-4-carboxamide. It functions in the pathway amino-acid biosynthesis; L-histidine biosynthesis; L-histidine from 5-phospho-alpha-D-ribose 1-diphosphate: step 4/9. The sequence is that of 1-(5-phosphoribosyl)-5-[(5-phosphoribosylamino)methylideneamino] imidazole-4-carboxamide isomerase from Caulobacter sp. (strain K31).